A 172-amino-acid chain; its full sequence is Adenine phosphoribosyltransferase (172 aa).

The protein belongs to the purine/pyrimidine phosphoribosyltransferase family. As to quaternary structure, homodimer.

Its subcellular location is the cytoplasm. It carries out the reaction AMP + diphosphate = 5-phospho-alpha-D-ribose 1-diphosphate + adenine. It functions in the pathway purine metabolism; AMP biosynthesis via salvage pathway; AMP from adenine: step 1/1. In terms of biological role, catalyzes a salvage reaction resulting in the formation of AMP, that is energically less costly than de novo synthesis. This Levilactobacillus brevis (strain ATCC 367 / BCRC 12310 / CIP 105137 / JCM 1170 / LMG 11437 / NCIMB 947 / NCTC 947) (Lactobacillus brevis) protein is Adenine phosphoribosyltransferase.